The following is a 104-amino-acid chain: Flagellar hook-basal body complex protein FliE (104 aa).

It belongs to the FliE family.

It is found in the bacterial flagellum basal body. This chain is Flagellar hook-basal body complex protein FliE, found in Salmonella arizonae (strain ATCC BAA-731 / CDC346-86 / RSK2980).